Reading from the N-terminus, the 869-residue chain is Protein translocase subunit SecA (869 aa).

Residues glutamine 85, 103 to 107 (GEGKT), and aspartate 508 each bind ATP.

Belongs to the SecA family. As to quaternary structure, monomer and homodimer. Part of the essential Sec protein translocation apparatus which comprises SecA, SecYEG and auxiliary proteins SecDF. Other proteins may also be involved.

The protein localises to the cell membrane. The protein resides in the cytoplasm. It carries out the reaction ATP + H2O + cellular proteinSide 1 = ADP + phosphate + cellular proteinSide 2.. In terms of biological role, part of the Sec protein translocase complex. Interacts with the SecYEG preprotein conducting channel. Has a central role in coupling the hydrolysis of ATP to the transfer of proteins into and across the cell membrane, serving as an ATP-driven molecular motor driving the stepwise translocation of polypeptide chains across the membrane. The protein is Protein translocase subunit SecA of Deinococcus geothermalis (strain DSM 11300 / CIP 105573 / AG-3a).